The chain runs to 468 residues: Tissue alpha-L-fucosidase (468 aa).

Residues 1-22 (MRSWVVGARLLLLLQLVLVLGA) form the signal peptide. T173 is modified (phosphothreonine). N-linked (GlcNAc...) asparagine glycosylation is found at N244, N271, and N320.

The protein belongs to the glycosyl hydrolase 29 family. As to quaternary structure, homotetramer.

The protein localises to the lysosome. It catalyses the reaction an alpha-L-fucoside + H2O = L-fucose + an alcohol. It carries out the reaction a neolactoside IV(2)-alpha-Fuc-nLc4Cer(d18:1(4E)) + H2O = a neolactoside nLc4Cer(d18:1(4E)) + L-fucose. The catalysed reaction is a neolactoside IV(2)-alpha-Fuc-nLc4Cer(d18:0) + H2O = a neolactoside nLc4Cer(d18:0) + L-fucose. Functionally, alpha-L-fucosidase is responsible for hydrolyzing the alpha-1,6-linked fucose joined to the reducing-end N-acetylglucosamine of the carbohydrate moieties of glycoproteins. This Bos taurus (Bovine) protein is Tissue alpha-L-fucosidase (FUCA1).